The chain runs to 397 residues: Iron-sulfur cluster assembly SufBD family protein Mb1497 (397 aa).

Belongs to the iron-sulfur cluster assembly SufBD family.

In Mycobacterium bovis (strain ATCC BAA-935 / AF2122/97), this protein is Iron-sulfur cluster assembly SufBD family protein Mb1497.